Here is a 7639-residue protein sequence, read N- to C-terminus: MAPATCCCCADSASQAMPDMEPTIFPASEIKEEIQTMISSYSSRLGHDFNQDLAKPCNMFCLAWAILLERFTGLDNVCFGFRSEHMVTAGSERTGGVASAMQVQVTADHSVQENLDENAFVSVMIPETKAETLFNTTLSICNLGNQPLCEDEARKIDVLCKLHMSVDPATMKTLLSWDSTFMTREQAETISNTYDKIFRELSSKKRTTVSAIHCCSEQDELKILSWNGSPLNNVQKCIHQAVSWQGAMRPDAEAVCSWDGSFSYAQLLSLSDRLAFHLKKLGVGAETFVPICFDKSKWTIVAMLAILKAGGIFVPLDPTQPLLRLQNLTRKVDADTILCSPQHQEMIESIASKVIPVDAQLFESLAEQRGEVDCGSWSSGAYMIFTSGTTGEPKGALIQHGALLSSALAHGPAMMMDNNTRSLHFAASTFDVSITEILTCLILGGCVCIPSEEARLNAIEEAITQLRVNWALLTPTFVKFINPDNVPSLKTLVTGGEAMTQAVIRSWSHINLINCYGPAETSVVSHVHRGMREGKNPLNIGHQVGIHCWVVDRYNHNRLMPVGAVGELVIESHTLAREYYKEPEKTSEAFIVDPEWALNQPHHSSPRRMYKTGDLVRYNYDSSFHIAGRKDAQIKFHGQRIELGEIEYHINVGINIKHGMVVLPKAGFCEGRLLAIVQLSDASGHDLVPNGRPYQLIDGPLEQVAIAKVEETKQLLTERLPSYMVPSMWLAVEFIPRLQSGKLDRKQTGKWVEDMTEETYRKLNPVAVGDPSESLTFSNGTESQLHNIWTHVLNLKPEQLGLSQSFLSVGGDSISAMQVMSECKKRGLGLTVSHIISCKSISALARHVKEIEKPMLLQETTETPFELSPIQRLYFSRSNHDQGHYNQSFLLRVSRRIDESAMRRAIEVVIRKHSMLRARFSRDDTGRWQQRVTDKVESSYRLRSIQLSSNEELSHALIDSQTCLDYANGPLLAADLLDEEGQDQRLFVVAHHLVIDLVSWRIVLQELEELLLRPELKPDMDRPLPFQTWCQMQREHASAQTPEQALPIHGIPDGDPTYWGMEDTPNIYGQMVHEGFEVGSAQTSLLLSKCHDALRTEIPDVLMAAMVYSFGQTFTDRQTPAIFAEGHGRESWDPSIDLSNVVGWFTTIYPVFADSDATSTLIDTIKMVKDGRRKVPDNGRPYFASRWLTESGEKAFARHWPLEITFNYLGQYQQLEREGALFIPVKGIAGEVSSATDGADVGSLATCISLFEVSAVITKGTLRFSFLFNQNMKHQPKIRQWIASCEQNLSLLVESLAVMSPEPTLSDFPLVSLTYDRLRLLTQEKLPEVGIEDMGRVEDIYPCSPMQSGLLVSTTKDSAAYAAYTLHQVKSRSGGAVDVTKLADAWKRMVDYHPMLRTVFVESVTLDESLFDQVLLKEVKVPLVMSELGTDEEAIKTLDKARHHDEYSQLLHVFEICKTTSGNVFCKLDISHVIMDGTSLSILFRDLSLAYAGILGPDKGPPYSEYIRSLQHQGLQHGIEYWKSYLMGIEPCHFPVLDDGEVVDTRESKCFRVEFDELAQLQRLCDDRGVTIVNAIYAAWALVLRLYTASEEVCFGYLTSARDSQIEGIEDVVGPVINMVTCRANISDSTTLGDTMTVVQNDFLNSLKHRHIPLAQVQHALKLSDVALFNTALSYRKLPPALQDAPDVMFEEVRPTYDPDEYDVSINIEAGENDMMIDLTYWSDTMSDGQATNVASAFTTALSNILHHSDKPVAQLNHLGPRHHQQISQWNNVIPEAVESCVHGLFEEQAILRPEAPAITSWDADFTYAELDTTSTKLAHYLADLGVGLEQFVLVCFDKSAFAIVAMLAVLKAGGVCVPLDPAHPDAAIRLRAEDTGASIAAVSSSMASRLSNIVDKAVVVDSNLLQNISENAILPQINPHNACFVIYTSGSTGRPKGVVLEHRGIATNAKSSGPKLGYSEESRVLQFASYTFDNSLAEIFTTLALGGCVCVPSEHERFNDLAGAISRYRVTLADITPTVACLINPLDVPTLKTLALGGEAVTHKCVDIWRDFVSLQCCYGPSECSVNSTYSGEIAQPGKATNIGRAVGSVTWVVDATDHNRLVPIGCIGELLIDGPIVSRGYLNLPEKMAQSFVAPPASLGDMCREGNLSRKLYKTGDLVRYNSDGTLTYFGRKDTQVKLHGQRIELEEIEHHLEQNLPQDWTSAVELIQFEGKKSLASFICADLGSVRSASNEKNTVLAMDDSFRSLAKELEIALSNNLPAYMIPSVWLPVSEMPMTSSGKLDRRSLRSMVQSLPASEMTSYKLALKSGRAPASDMEKQLASMWAHVLNVDANTIGVEDHFFRLGGDSIAAMQLVTLARKSNINLTVTGVFQKGSLLDMAQSALPLSRTAVATVYAFSLLPEVVSLDALKEEIGSCARIQVGDVEDIYPCTPLQQGLMALSAKEPGAYVAQLVFRLPNGTDLDNFKMAWRLVIEAEGTLRTRLVQTTDHGILNVVVKGDVPQWSTDRSLSDLQRLRSHLPSSNGGRLTDYAIVEDGSDVSFVWTIHHALYDGWCLPLILDRVKQCYEGIQSSTSEPIASGPTYSRFIRYLNETDSSQDVKFWESYLSDISTQHFPRLPDPDYKPSASGLIIHKTCFDNTRDGMKSVGLGITTATMIRSAWALTVSTYAASDDVVFWETMTGRDVPVEGIEEMVGATLSTVPTRIALDRSQKVSDLLSSVQAQSAVVRMHQFAGIHTIKRINTDTAFACGAQNLLAINYGPRTSTDSFWCDQTNEMAGTNFYSYPLMLSCHVADGELETVVHFDPDVICESQMHRVMDQFALMLTAVTSKDLVDEKLSELDLISTRDYQSLSEMNGQMVPSCDMCVHDVIKASGIAQPLDKLAVCAWDQNLTYEGLDSQSTHLSSALIEAGVRPNTFVPFCMEKSSMVVVSILAILKSGAAFVPLDYAHPDARISGIIADVEAEFVLSSPQYAERLTKLGAKVISVSKDTIQDSMPLQQHDLSVSTKSPAYCIFTSGTTGRPKGTIIDHSAFCTGALAHGKAMGMNESSRVLQFASHTFDASIMETLSTLIHGGTVCVPSEEERSQDIAGFIRRMSVNWALLTPSVAQLIEPSTVPELKTLVLGGEAMSRAHLSTWAPSVQLMNAYGPSETSVVATVNSNVTLDSSPANIGRAVGGLCWVVDSANADRLLPIGVVGELFVEGPILSQGYLKNSQKNAESFITNPRWCSKFTSETASSERRFYRTGDLVKITEDGSIEFQGRKDNQVKINGQRLELSEIEHHLNTDAIVQACLAFIPTTGPLKSRLVAVLSLHSTFVSRGPDEMQLVIDFARSELTSVRDSLTGQLASYMIPSMWIVVNRIPLLPSGKLDRRRVANWVEAMSPEQYQLAIGAQDESYASGLDREATETETKLRAAWAKVLGIEVESVPFTRSFIQLGGDSISAMQLVAICRSSNMALSVSQIMQSKSIVKLASFVQAVEDVTQDDEQEDKAFPLSPIQKLYFERMYSDSTHFNQSMVLETTRKITPQDLSNALEAIVKTHSMLRARFSDVDGAYSQRITSDIAGSYAFESHVGMDQCRVSELIEKTQKSLNIFQGPLLAAASIEMEDIDKQIVFLAVHHLVVDVVSWNIILQDLEGLLSSSASNLGKPLSFQTWNTLQLEESRNQTPDRVFHNLPTPAQDLAYWGMQAVPNIHGDAIAETIEIASDVSLQLLGPCHEALNTNVVDVLLASLLSSFHQAFPDRLSMPTIFNEGHGREPADNKLDLSRTVGWFTTLCPVYLPDSLPVQPDILDIICWVRDFRRRIPGNGRPYFAHQMLSESGQKESAEWPAELAFNYLGQRQKTELEGSLFKSPDGVLASVGSETDIGADVPRLALIEISASFSRDDLSFSFSYSRQMKHQPCIREWVKNFSATLQTAVERMTQAKAEPQDLDTSLLPLAFRATSKVDTRLAELGISCCADVEAVYPCSPVQMGILFAQIRNPEFYSYSVTFGVNCIEPSRVVDVQRLKDAWQRVVQRHSTLRTTFVDGLLEEGGINQVVLRNHCADISVFERADNDELQMITERIKPKIMSNKPPHHLSIFSSAEGKVTCVLEMSHALSDGTSMPILFRDLAMAYEGSLDPTIVSAYRDYVSYLQCQGPNDIEYWREYLTGAEPCHLPLASKSTLPRALGYLDQTISCAADLQAFCTGAGVTLSNVIQLAWALVLQAYTGHDDVCFGYLLADRDAPVDNIDNAIGVFINMLVLRVRLGSSQSVGDALGAVQQDLSAAIGHKNISLTDIQRVTGLLNEPLFNTAYSFQRRSISKSMANGSLSFDVREAQDPNEYDLTVNVEVWDQAAELQLCYWTDKISNSQAKTIASTFDKILTSIATCDLSLPTNQLDIVSDDCAQQLTRWNNTEPTLLDQCVHHVFERNVQSLPHDTPAIEAWDARFTYSEVDMLSSRLAHHLVSLGILPEMYVPLCFEKSAWTPIAMLAVLKAGAAFVPIDPTHPPERIEFLVQNTSAKLILCSTSLAEKFDIGVPFLAIDHETMSTLSALPVTSPSIAVQPNNAAYIIFTSGTTGLPKGTIVEHAAFTTGGTAHAAAIKMTCSSRVLQFASYTFDASIMEILTTFLVGGCVCVPSDEERMNDLAGTMAKYDVNWALLTPSVAKVLKPGSVPGLKVLVTGGEAMSTDHITKWLGHAALINAYGPSEASVIAASHTKVDENGVILNEEPANIGHAVGCRTWVVDPHNHNHLMPIGSIGELLLEGPILARGYLKNETKTTDAFIDYPPWRANMSLSGDRVDRMYKTGDLVSQNSDGSLNYVSRKDTQIKLNGQRIELGEIEHHVRANLPAHVQSAVELVVPQSKTSTKTLAAFFTVDDHEVLKETSDPLLPMSSAYMEIGQSLKTALRVALPTHMVPTMYVPLTKMPWTSAGKLDRQKLKTIVQSIAPQDIGGYKLVGASNSRAPTTMMQRKLQKIWAGILNIHPSTISIDDSFFRLGGDSISAMKVVSAARMEEISLTVMDILTSPTLSEMATCCGHSENTTVMEVEPFSLLHDVDSPPSLLDEVADCCDVPTSQIQDLYPCSSLQEGLVAASMQQPGAYVARYIFKVPSTIDMERLKMAWQNTSNHVDILRSRIVNARSLKTYQAILEPHAINWEHYTSLEAIADKTIQLPERNGGVLAKYAIIDSSDPDLRYFVWSVHHALYDAWSMPSLLNLVSQFYHEATTEQLAPPVPYANFARYLVDSDAQASDEFWKATFQNASGVSHFPTATLSDEESTYSSLQHTIQCRRDDLGADITIPTIVRAAWALLLGAHTGSDDVGFGETLSGRDIALEHVEDILGPTLTTVPWRVQIDRSATVGHFLHSLHKKSAEVIPHQHAGLQHIKRLGGSIAVASDFRNLLVIQASDEATDHQDLLQPLEENGNHKNFFTYPLVVECSIELNNLVLTIHHNETVMTSWQVERLAHQFDALVNQLSRLSQEPDRKVAELQFCSEEDLQMIKGWNNGTCDAVYDTIPSLFWQSVATYHDATSIRAWDGHLTYGSLAQHAGHLAKRLIQEGVKAETMVPCCMDKSLWTTVAMLAVVLAGGTIIPMDPAHPRARHAEIARECKAIIALCSPEYRDRFIGVVPTVIAIDQTLFTKQLCQDHIASEDLPLVADKDAAFVIYTSGSTGKAKGVVIEHGSFVASSRAYIKHMNLSATSSVFHFTSYAFDIAMGETFGALTTGACLCVPSEEMRVTDLPGVMNTLGATWAFLTPSLANMQDPSMFKTLQALVCGGEAMTSETVSKWSNKVKLINGYGPAECTVFALSNSNVSEDQDHSNIGRAMDGCQTWIVDTRDHNKLVPVGCEGELLISGPILSRGYLNDSAKTSKSFIENPAWMHHFDDKKHQNPVRLYKTGDLVRYRPDGNLTFIGRKDNQVKLHGQRMELGEIEACLESDPRLRNALVALPKSGVFKGRLVAVLSFKDSDSHNPGLVSSQFSPISESDMDVARLHLPDLQQILSENLPPYMMPSSWLVVEAIPLLLSGKLDRASTQKWLTEMVAETPEFLLDQQLGQDAGATDTTFVGQLLRKIWASVLRIPDESKLSGRSFISLGGDSIMAMQVMSRCRDHSIQLTMRDIMSGKSISDLVTLIEKEGRGKQTVNPEYEEDNSRPFALSPIQQLFFNNSNDKDRGDRFNQSQLFSITESIDKDTFANAIHALVQRHPMLRARFNKSSTTGQWSQQVAPDTEDSYGLHFHEVSDASQIARQIAASQESIGISGPVFIVDLFKMPDGHHHVSMIAHHLVVDVVSWINIAQDLETLLSTSPSMSSKPLSFRKWNAAQTEHATSVAKKNEDLLPFTVRPANLDYWGVSGVSNSYSQVTQQSFSLSDVDTVSLLLGDAHQALRTEPLDLFISALLISFGQCFPDRELPTLFNEGHGREPWDDSIDLSQTVGWFTSLCPIDISHHNADPTYTIDYVRKVKDVRRAIPGNGRPYFAQRYLTDSGKQSLDAHEPMEILLNFLGRSQQSGEDDSILRLSNLSMSDEDMASMSDVGPETRRLALFELSISILDEGIQFTFMYNKNMLHQDLIQQWVITCKEVLGNMAMELSTAPSCPTISDFPLMSLDYAELNKLVTKSLPTAHVRFDEVEDMYPCSPMQMGILISQLLDPSQYLFYAVLEVSASSRSAIDSAKLAQACSEVVERHDALRTVFIESVRSGGSFDQVVLRPGKPRIATFKCREIDVMAKLNTRSLGKTNKRHGVPILPYQITICETPQGKVFIKLEMNHAVTDGASTAIVLRDISSAYANNLHPTKAPSYKEYINYITKQPSDSSLMYWKSYLYGARNTEFPAMNSDHISGRSLGSIAVDFDRFSELQSLGLDAGVTFSNMIMVAWALVLRKYTNSQDVCFGYLGSGRDADIDGVDEIVGPLINMLVFRFQFTHSMLLKRLFLDTQEDYANSLPHQHFSLARVSHELGQSKRGFFNTAVSIQNAGASSDADFSALKFESVDAFDPSEYAVTLNANTTRGDEGIVFRYWTNILSHSQAKELAIVMSEVLSDMIDHSEEALSHLRVSQDSSLPTNPAQDLHGWTFEHSDTSEQFKTTNSTISSYSTGPGATLFSPATSWGSLPRDKDQVYNKLSALWKQHLDVATTDLTYDGSFFEYGGDSIIAMAMVGDARDRDLPLTVADIFKNPSFGTLLNCLRDKSYREGDMVSSDGNISLSGSKKEGIVVDEHTYEPLSLLPQQNAEQFVREHVCPVVGVSRASITDVLPTTDFQAQAIEGSLLDSRWMLNYFHLDGEGPLDVALLQESITNVIASYDVLRTVFVPYEATYLQVILRHVQSELIFHDVDDVEQFTLDLESDHLRQIPSPEKPSLRFILARHEPSERHRLFIRLSHALYDGVCFPAILNALKASYEGEPIATTPSYATYIHGLFSKANPDQHTYWRSLLEGSAPTNLIPRECRSMRTNPTQALRKIVATPSLATVNITTATVIKAAWSVVLAKNTGTRDVVFGHLISGRNSCHVPGIEAIVGPCLNVVPVRVQYQDSWMVLDLLQHIQHQQVDNIPHESLGFREIIRNCTNWDDDGANGFSTVVQHQSMAQTGSLDIGDNTYEVGVIASQEDTADFSVVTTPQDSSNTEVCFLYREGGVERTEFAEKLFDCLCSTIGDLSRDVKTPLVSWL.

Positions 244–636 are adenylation 1; the sequence is WQGAMRPDAE…AGRKDAQIKF (393 aa). Residues 776–852 form the Carrier 1 domain; that stretch reads TFSNGTESQL…ALARHVKEIE (77 aa). Ser-813 carries the O-(pantetheine 4'-phosphoryl)serine modification. Residues 865–1295 are epimerization 1; it reads FELSPIQRLY…EQNLSLLVES (431 aa). The tract at residues 1337–1767 is condensation 1; it reads VEDIYPCSPM…HLGPRHHQQI (431 aa). Positions 1786-2181 are adenylation 2; sequence FEEQAILRPE…FGRKDTQVKL (396 aa). One can recognise a Carrier 2 domain in the interval 2313–2389; sequence APASDMEKQL…DMAQSALPLS (77 aa). An O-(pantetheine 4'-phosphoryl)serine modification is found at Ser-2350. The interval 2426-2852 is condensation 2; it reads VEDIYPCTPL…LISTRDYQSL (427 aa). The interval 2878–3269 is adenylation 3; sequence QPLDKLAVCA…QGRKDNQVKI (392 aa). Positions 3403-3479 constitute a Carrier 3 domain; that stretch reads REATETETKL…KLASFVQAVE (77 aa). Ser-3440 is subject to O-(pantetheine 4'-phosphoryl)serine. The epimerization 2 stretch occupies residues 3491-3928; sequence AFPLSPIQKL…RMTQAKAEPQ (438 aa). The segment at 3961–4389 is condensation 3; sequence EAVYPCSPVQ…VSDDCAQQLT (429 aa). Residues 4407–4810 form an adenylation 4 region; that stretch reads FERNVQSLPH…VSRKDTQIKL (404 aa). The region spanning 4944–5020 is the Carrier 4 domain; the sequence is APTTMMQRKL…EMATCCGHSE (77 aa). O-(pantetheine 4'-phosphoryl)serine is present on Ser-4981. The tract at residues 5058–5478 is condensation 4; sequence QDLYPCSSLQ…QFCSEEDLQM (421 aa). The interval 5498-5900 is adenylation 5; it reads FWQSVATYHD…IGRKDNQVKL (403 aa). One can recognise a Carrier 5 domain in the interval 6039-6115; the sequence is TDTTFVGQLL…DLVTLIEKEG (77 aa). Ser-6076 is modified (O-(pantetheine 4'-phosphoryl)serine). Positions 6133–6567 are epimerization 3; sequence FALSPIQQLF…EVLGNMAMEL (435 aa). The interval 6607-7032 is condensation 5; that stretch reads VEDMYPCSPM…EALSHLRVSQ (426 aa). The region spanning 7088–7164 is the Carrier 6 domain; the sequence is RDKDQVYNKL…TLLNCLRDKS (77 aa). An O-(pantetheine 4'-phosphoryl)serine modification is found at Ser-7125. Residues 7254–7603 form a condensation 6 region; sequence LDGEGPLDVA…SNTEVCFLYR (350 aa).

This sequence belongs to the NRP synthetase family.

It catalyses the reaction D-allo-threonine + D-leucine + D-alanine + L-proline + 2 L-leucine + A = fusahexin + AH2 + 6 H2O. Its pathway is secondary metabolite biosynthesis. Nonribosomal peptide synthetase; part of the gene cluster that mediates the biosynthesis of the fusahexin, a cyclic hydrophobic hexapeptide with the amino acid sequence cyclo-(D-Ala-L-Leu-D-allo-Thr-L-Pro-D-Leu-L-Leu) that plays an important role in cell surface hydrophobicity. Fusahexin might also play a role in virulence, sensitivity to osmotic stress and oxidative stress. NRPS4 is the only enzyme within the cluster and its 5 catalytic modules are sufficient to produce fusahexin. The modules 1 to 4 incorporate respectively D-alanine, L-leucine, D-allo-threonine, and L-proline, which is supported by the presence of epimerase domains in modules 1 and 3, which incorporate D-amino acids. The terminal module is responsible for incorporation of the two adjacent leucine units, where the epimerase domain is only used to convert the first unit to D-leucine. The terminal condensation domain (Ct) is involved in cyclization with D-alanine and thereby releasing of fusahexin. The polypeptide is Nonribosomal peptide synthetase 4 (Gibberella zeae (strain ATCC MYA-4620 / CBS 123657 / FGSC 9075 / NRRL 31084 / PH-1) (Wheat head blight fungus)).